Reading from the N-terminus, the 553-residue chain is Rhodopsin kinase GRK7 (553 aa).

Position 36 is a phosphoserine; by PKA (serine 36). Residues 56–176 form the RGS domain; sequence FHSLCEQQPI…VTSAFYDKFL (121 aa). The Protein kinase domain maps to 191 to 454; sequence FTEFRVLGKG…SDDPRKHHFF (264 aa). Residues 197–205 and lysine 220 contribute to the ATP site; that span reads LGKGGFGEV. Residue aspartate 316 is the Proton acceptor of the active site. Residues 455–520 form the AGC-kinase C-terminal domain; it reads KTINFPRLEA…GAVPIAWQEE (66 aa). Cysteine methyl ester is present on cysteine 550. Cysteine 550 carries S-geranylgeranyl cysteine lipidation. A propeptide spans 551–553 (removed in mature form); sequence LLL.

This sequence belongs to the protein kinase superfamily. AGC Ser/Thr protein kinase family. GPRK subfamily. In terms of assembly, interacts (when prenylated) with PDE6D; this promotes release from membranes. In terms of processing, autophosphorylated in vitro at Ser-490. Phosphorylation at Ser-36 is regulated by light and activated by cAMP. In terms of tissue distribution, retinal cones, outer and inner segments.

It is found in the membrane. The catalysed reaction is L-threonyl-[rhodopsin] + ATP = O-phospho-L-threonyl-[rhodopsin] + ADP + H(+). The enzyme catalyses L-seryl-[rhodopsin] + ATP = O-phospho-L-seryl-[rhodopsin] + ADP + H(+). Its activity is regulated as follows. Inhibited by phosphorylation of Ser-36. Its function is as follows. Retina-specific kinase involved in the shutoff of the photoresponse and adaptation to changing light conditions via cone opsin phosphorylation, including rhodopsin (RHO). The polypeptide is Rhodopsin kinase GRK7 (GRK7) (Homo sapiens (Human)).